The primary structure comprises 335 residues: Transaldolase (335 aa).

Catalysis depends on Lys135, which acts as the Schiff-base intermediate with substrate.

Belongs to the transaldolase family. Type 1 subfamily. Homodimer.

It is found in the cytoplasm. It carries out the reaction D-sedoheptulose 7-phosphate + D-glyceraldehyde 3-phosphate = D-erythrose 4-phosphate + beta-D-fructose 6-phosphate. It participates in carbohydrate degradation; pentose phosphate pathway; D-glyceraldehyde 3-phosphate and beta-D-fructose 6-phosphate from D-ribose 5-phosphate and D-xylulose 5-phosphate (non-oxidative stage): step 2/3. Its function is as follows. Transaldolase is important for the balance of metabolites in the pentose-phosphate pathway. This chain is Transaldolase, found in Prochlorococcus marinus (strain SARG / CCMP1375 / SS120).